A 517-amino-acid polypeptide reads, in one-letter code: MKRSLLKTCSIIAGATIIFSSLSISRNPLEVQAASMRSASEIVQEMGVGWNLGNTLDAKITNLSYNTSPISFETGWGNPVTTKAMIDKIKNAGFKTIRIPTTWGEHLDGNNKLNEEWVKRVKEVVDYCIADDLYVILNTHHEGNWVIPTYAKESSVTPKLKTLWTQISEAFKDYDDHLIFETLNEPRLEGTPYEWTGGTSESRDVVNKYNAAALESIRKTGGNNLSRAVMMPTYAASGSSTTMNDFKVPDDKNVIASVHAYSPYFFAMDTSSNSVNTWGSSYDKYSLDVELDSYLNTFKSKGVPVVIGEFGSINKNNTSSRAELAEYYVTAAQKRGIPCVWWDNNYAETNKGETFGLLNRSTLNWYFSDIKDALIRGYKNVHPEATEDDKPSTDVTNPDSGNTKPDSGNTNPGTETTTPTDNEKISITSKINDWGGAYQADFTLKNNTSSDINNWSFKIKKNDIVFTNYWDVKITEENGYYVVTPQAWKTTILANSSIVISIQGTGKVISNFEYKFD.

Positions 1–25 are cleaved as a signal peptide; sequence MKRSLLKTCSIIAGATIIFSSLSIS. The Proton donor role is filled by E185. E309 (nucleophile) is an active-site residue. A compositionally biased stretch (basic and acidic residues) spans 382–392; it reads HPEATEDDKPS. The disordered stretch occupies residues 382-424; the sequence is HPEATEDDKPSTDVTNPDSGNTKPDSGNTNPGTETTTPTDNEK. Polar residues predominate over residues 393–407; it reads TDVTNPDSGNTKPDS. The segment covering 408–420 has biased composition (low complexity); that stretch reads GNTNPGTETTTPT. Residues 416-517 form the CBM2 domain; sequence TTTPTDNEKI…VISNFEYKFD (102 aa).

It belongs to the glycosyl hydrolase 5 (cellulase A) family.

It catalyses the reaction Endohydrolysis of (1-&gt;4)-beta-D-glucosidic linkages in cellulose, lichenin and cereal beta-D-glucans.. In terms of biological role, hydrolyzes barley beta-glucan, lichenan, carboxymethylcellulose and xylan. It shows preferential activity against the larger cellooligosaccharides (cellohexaose and cellopentaose); cellotetraose is the smallest substrate degraded completely. This is Endoglucanase A (celA) from Clostridium longisporum.